The sequence spans 263 residues: Probable ribosomal RNA small subunit methyltransferase A (263 aa).

S-adenosyl-L-methionine is bound by residues L12, G37, E58, D83, and N100.

It belongs to the class I-like SAM-binding methyltransferase superfamily. rRNA adenine N(6)-methyltransferase family. RsmA subfamily.

Its subcellular location is the cytoplasm. Functionally, specifically dimethylates two adjacent adenosines in the loop of a conserved hairpin near the 3'-end of 16S rRNA in the 30S particle. May play a critical role in biogenesis of 30S subunits. In Methanococcus maripaludis (strain C5 / ATCC BAA-1333), this protein is Probable ribosomal RNA small subunit methyltransferase A.